The chain runs to 343 residues: Mitochondrial import inner membrane translocase subunit TIM50-A (343 aa).

The Mitochondrial matrix segment spans residues 1–57 (MHKIVWFGTLNKSIGYIGKKKTCLLSPCEKICLNSARKTVQRCDKNYSPPKLRRIKN). The chain crosses the membrane as a helical span at residues 58–77 (FYTYSVVLGSLFSIVMWAIY). The Mitochondrial intermembrane segment spans residues 78–343 (KLGKPEEDHR…GRSLRGSSIK (266 aa)). In terms of domain architecture, FCP1 homology spans 135–278 (YIQPPYSLVL…FDLTAFLQLI (144 aa)).

Belongs to the TIM50 family. As to quaternary structure, component of the TIM23 complex at least composed of Tim23, Tim17 (Tim17a1, Tim17a2 or Tim17b1) and a Tim50. As to expression, exclusively expressed in the testis.

It is found in the mitochondrion inner membrane. Functionally, essential component of the TIM23 complex, a complex that mediates the translocation of transit peptide-containing proteins across the mitochondrial inner membrane. The polypeptide is Mitochondrial import inner membrane translocase subunit TIM50-A (ttm3) (Drosophila melanogaster (Fruit fly)).